A 26-amino-acid chain; its full sequence is Superoxide dismutase [Cu-Zn] (26 aa).

Cys7 carries S-palmitoyl cysteine lipidation.

This sequence belongs to the Cu-Zn superoxide dismutase family. As to quaternary structure, homotrimer. The cofactor is Cu cation. Requires Zn(2+) as cofactor.

It localises to the cytoplasm. The protein localises to the nucleus. The catalysed reaction is 2 superoxide + 2 H(+) = H2O2 + O2. Functionally, destroys radicals which are normally produced within the cells and which are toxic to biological systems. This Paralichthys olivaceus (Bastard halibut) protein is Superoxide dismutase [Cu-Zn] (sod1).